Consider the following 798-residue polypeptide: Ubiquitin carboxyl-terminal hydrolase 10 (798 aa).

Position 2 is an N-acetylalanine (A2). The interaction with p53/TP53 stretch occupies residues 2-100 (ALHSPQYIFG…ILGCTASKIT (99 aa)). The segment at 6–21 (PQYIFGDFSPDEFNQF) is G3BP1-binding. Position 24 is a phosphothreonine (T24). Phosphothreonine; by ATM is present on T42. Residue T100 is modified to Phosphothreonine. Disordered stretches follow at residues 139-166 (GVSG…LKDG), 194-257 (AEFM…CFPA), and 307-337 (TESI…LPVS). Over residues 205–219 (TPRTCNSPQNSTDSV) the composition is skewed to polar residues. A phosphoserine mark is found at S211 and S226. The segment covering 307–316 (TESIDLDPTK) has biased composition (basic and acidic residues). Phosphoserine is present on S321. The segment covering 328 to 337 (GSASGTLPVS) has biased composition (polar residues). A Phosphoserine; by ATM modification is found at S337. S365 and S370 each carry phosphoserine. Positions 415-795 (RGLINKGNWC…TAYLLYYRRV (381 aa)) constitute a USP domain. C424 (nucleophile) is an active-site residue. Phosphoserine is present on S547. Over residues 551–562 (EKLTISNGPKNH) the composition is skewed to polar residues. A disordered region spans residues 551–594 (EKLTISNGPKNHSVNEEEQEEQGEGSEDEWEQVGPRNKTSVTRQ). S563 and S576 each carry phosphoserine. The segment covering 566–581 (EEEQEEQGEGSEDEWE) has biased composition (acidic residues). H749 functions as the Proton acceptor in the catalytic mechanism.

This sequence belongs to the peptidase C19 family. USP10 subfamily. Found in a deubiquitination complex with TANK, USP10 and ZC3H12A; this complex inhibits genotoxic stress- or interleukin-1-beta (IL1B)-mediated NF-kappa-B activation by promoting IKBKG or TRAF6 deubiquitination. Interacts with IKBKG; this interaction increases in response to DNA damage. Interacts with TANK; this interaction increases in response to DNA damage. Interacts with TRAF6; this interaction increases in response to DNA damage. Interacts with ZC3H12A; this interaction increases in response to DNA damage. Interacts with G3BP1 (via NTF2 domain) and G3BP2 (via NTF2 domain); inhibiting stress granule formation. Post-translationally, phosphorylated by ATM following DNA damage, leading to stabilization and translocation it to the nucleus. In terms of processing, ubiquitinated. Deubiquitinated by USP13. In terms of tissue distribution, widely expressed.

It is found in the cytoplasm. The protein resides in the nucleus. The protein localises to the early endosome. The catalysed reaction is Thiol-dependent hydrolysis of ester, thioester, amide, peptide and isopeptide bonds formed by the C-terminal Gly of ubiquitin (a 76-residue protein attached to proteins as an intracellular targeting signal).. With respect to regulation, specifically inhibited by spautin-1 (specific and potent autophagy inhibitor-1), a derivative of MBCQ that binds to USP10 and inhibits deubiquitinase activity. Regulated by PIK3C3/VPS34-containing complexes. Hydrolase that can remove conjugated ubiquitin from target proteins such as p53/TP53, RPS2/us5, RPS3/us3, RPS10/eS10, BECN1, SNX3 and CFTR. Acts as an essential regulator of p53/TP53 stability: in unstressed cells, specifically deubiquitinates p53/TP53 in the cytoplasm, leading to counteract MDM2 action and stabilize p53/TP53. Following DNA damage, translocates to the nucleus and deubiquitinates p53/TP53, leading to regulate the p53/TP53-dependent DNA damage response. Component of a regulatory loop that controls autophagy and p53/TP53 levels: mediates deubiquitination of BECN1, a key regulator of autophagy, leading to stabilize the PIK3C3/VPS34-containing complexes. In turn, PIK3C3/VPS34-containing complexes regulate USP10 stability, suggesting the existence of a regulatory system by which PIK3C3/VPS34-containing complexes regulate p53/TP53 protein levels via USP10 and USP13. Does not deubiquitinate MDM2. Plays a key role in 40S ribosome subunit recycling when a ribosome has stalled during translation: acts both by inhibiting formation of stress granules, which store stalled translation pre-initiation complexes, and mediating deubiquitination of 40S ribosome subunits. Acts as a negative regulator of stress granules formation by lowering G3BP1 and G3BP2 valence, thereby preventing G3BP1 and G3BP2 ability to undergo liquid-liquid phase separation (LLPS) and assembly of stress granules. Promotes 40S ribosome subunit recycling following ribosome dissociation in response to ribosome stalling by mediating deubiquitination of 40S ribosomal proteins RPS2/us5, RPS3/us3 and RPS10/eS10, thereby preventing their degradation by the proteasome. Part of a ribosome quality control that takes place when ribosomes have stalled during translation initiation (iRQC): USP10 acts by removing monoubiquitination of RPS2/us5 and RPS3/us3, promoting 40S ribosomal subunit recycling. Deubiquitinates CFTR in early endosomes, enhancing its endocytic recycling. Involved in a TANK-dependent negative feedback response to attenuate NF-kappa-B activation via deubiquitinating IKBKG or TRAF6 in response to interleukin-1-beta (IL1B) stimulation or upon DNA damage. Deubiquitinates TBX21 leading to its stabilization. Plays a negative role in the RLR signaling pathway upon RNA virus infection by blocking the RIGI-mediated MAVS activation. Mechanistically, removes the unanchored 'Lys-63'-linked polyubiquitin chains of MAVS to inhibit its aggregation, essential for its activation. The sequence is that of Ubiquitin carboxyl-terminal hydrolase 10 from Homo sapiens (Human).